Here is a 513-residue protein sequence, read N- to C-terminus: Xylose import ATP-binding protein XylG (513 aa).

ABC transporter domains follow at residues 5 to 242 (LEMK…VGRE) and 259 to 505 (LRIE…LRSE). 37-44 (GENGSGKS) serves as a coordination point for ATP.

This sequence belongs to the ABC transporter superfamily. Xylose importer (TC 3.A.1.2.4) family. In terms of assembly, the complex is composed of two ATP-binding proteins (XylG), two transmembrane proteins (XylH) and a solute-binding protein (XylF).

The protein resides in the cell inner membrane. It carries out the reaction D-xylose(out) + ATP + H2O = D-xylose(in) + ADP + phosphate + H(+). Part of the ABC transporter complex XylFGH involved in xylose import. Responsible for energy coupling to the transport system. The XylFGH system can also transport ribose in absence of xylose. This chain is Xylose import ATP-binding protein XylG, found in Escherichia coli (strain K12).